Consider the following 289-residue polypeptide: MTKPGIIFGNLISVAGGFLLAAKGDVNLVLMLASLVGLSLVVASGCAINNCIDRDIDAKMQRTCKRVTVTGEIAVGNVLAFGLALGVLGFSILALFTNALALLFAVIGYIVYVGVYSLYMKRNSVYGTLVGSFSGAVPPVVGYCSVTGQMDMGAAILLLMFSLWQMPHSYAIAIFRFNDYAAANIPVLPVAEGMTKAKLHIVLYIAVFALVSALLPLAGYTGIAFMAVTCATSLWWLAMALKGYRHGVDMQRWARQVFGFSIITITALSVTMALDFQVVSQAPLLTLVK.

The next 9 membrane-spanning stretches (helical) occupy residues Pro4–Gly24, Leu28–Ile48, Arg66–Gly86, Ala99–Leu118, Ser124–Cys144, Ala155–Phe175, Leu199–Gly219, Thr221–Leu241, and Gln256–Phe276.

The protein belongs to the UbiA prenyltransferase family. Protoheme IX farnesyltransferase subfamily.

It is found in the cell inner membrane. It carries out the reaction heme b + (2E,6E)-farnesyl diphosphate + H2O = Fe(II)-heme o + diphosphate. The protein operates within porphyrin-containing compound metabolism; heme O biosynthesis; heme O from protoheme: step 1/1. In terms of biological role, converts heme B (protoheme IX) to heme O by substitution of the vinyl group on carbon 2 of heme B porphyrin ring with a hydroxyethyl farnesyl side group. This chain is Protoheme IX farnesyltransferase 2, found in Shewanella baltica (strain OS195).